The following is a 168-amino-acid chain: MPLPHTHSLVVSTLSLEHSDKPQRRSRAKVKKKKKTNMSWQTYVDDHLMCDVAGNRLTAAAILGQDGSVWAQSNNFPQVKPEEIQGIKDDFTTPGTLAPTGLFLGGNKYMVIQGEPNAVIRGKKGAGGVTIKKTTLALVFGIYDEPMTPGQCNMVVENLGEYLIESGL.

A disordered region spans residues 14–36; sequence LSLEHSDKPQRRSRAKVKKKKKT. The span at 24-36 shows a compositional bias: basic residues; it reads RRSRAKVKKKKKT.

This sequence belongs to the profilin family. Occurs in many kinds of cells as a complex with monomeric actin in a 1:1 ratio. Binding to the poly-proline motif of formins induces formation of oligomers through the N-terminal hydrophobic residues of PRF3. Expressed in roots, rosette leaves, cauline leaves, stems and flowers.

The protein resides in the cytoplasm. It localises to the cytoskeleton. Functionally, binds to actin monomers and regulates the organization of the actin cytoskeleton. Can increase the critical concentration (Cc) of actin assembly in vitro. Acts as a downstream effector of the hydrogen sulfide signaling to regulate the assembly and depolymerization of F-actin. At high concentrations, profilin prevents the polymerization of actin, whereas it enhances it at low concentrations. Binding to the poly-proline motif of formin induces oligomerization of PRF3. PRF3 oligomers inhibit formin-mediated actin assembly to modulate plant immunity triggered by pathogen-associated molecular patterns (PAMPs). This chain is Profilin-3, found in Arabidopsis thaliana (Mouse-ear cress).